We begin with the raw amino-acid sequence, 29 residues long: Prolamin alpha-1 (29 aa).

The protein is Prolamin alpha-1 of Dactylis glomerata (Orchard grass).